The following is a 404-amino-acid chain: L-cysteine:1D-myo-inositol 2-amino-2-deoxy-alpha-D-glucopyranoside ligase 1 (404 aa).

C47 is a Zn(2+) binding site. Residues 47–50, T62, and 85–87 contribute to the L-cysteinyl-5'-AMP site; these read CGIT and NIT. The 'HIGH' region motif lies at 49-59; that stretch reads ITPYDSTHLGH. The short motif at 188–193 is the 'ERGGDP' region element; that stretch reads ERGGDP. Residue W228 coordinates L-cysteinyl-5'-AMP. C232 serves as a coordination point for Zn(2+). 250–252 serves as a coordination point for L-cysteinyl-5'-AMP; it reads GSD. H257 is a binding site for Zn(2+). I284 provides a ligand contact to L-cysteinyl-5'-AMP. A 'KMSKS' region motif is present at residues 290 to 294; it reads KMSKS.

Belongs to the class-I aminoacyl-tRNA synthetase family. MshC subfamily. Monomer. The cofactor is Zn(2+).

The enzyme catalyses 1D-myo-inositol 2-amino-2-deoxy-alpha-D-glucopyranoside + L-cysteine + ATP = 1D-myo-inositol 2-(L-cysteinylamino)-2-deoxy-alpha-D-glucopyranoside + AMP + diphosphate + H(+). Functionally, catalyzes the ATP-dependent condensation of GlcN-Ins and L-cysteine to form L-Cys-GlcN-Ins. This Corynebacterium urealyticum (strain ATCC 43042 / DSM 7109) protein is L-cysteine:1D-myo-inositol 2-amino-2-deoxy-alpha-D-glucopyranoside ligase 1.